A 91-amino-acid polypeptide reads, in one-letter code: Early E3B 10.4 kDa protein (91 aa).

A signal peptide spans 1-22 (MIPRVLILLTLVALFCACSTLA). The Lumenal portion of the chain corresponds to 23–34 (AVAHIEVDCIPP). A helical membrane pass occupies residues 35-60 (FTVYLLYGFVTLILICSLVTVVIAFI). Over 61 to 91 (QFIDWICVRIAYLRHHPQYRDRTIADLLRIL) the chain is Cytoplasmic.

It belongs to the adenoviridae E3B family.

Its subcellular location is the host endoplasmic reticulum membrane. Its function is as follows. Down-regulates the EGF receptor. This is Early E3B 10.4 kDa protein from Homo sapiens (Human).